The following is a 265-amino-acid chain: 3-deoxy-manno-octulosonate cytidylyltransferase (265 aa).

The protein belongs to the KdsB family.

The protein resides in the cytoplasm. The catalysed reaction is 3-deoxy-alpha-D-manno-oct-2-ulosonate + CTP = CMP-3-deoxy-beta-D-manno-octulosonate + diphosphate. Its pathway is nucleotide-sugar biosynthesis; CMP-3-deoxy-D-manno-octulosonate biosynthesis; CMP-3-deoxy-D-manno-octulosonate from 3-deoxy-D-manno-octulosonate and CTP: step 1/1. It functions in the pathway bacterial outer membrane biogenesis; lipopolysaccharide biosynthesis. Its function is as follows. Activates KDO (a required 8-carbon sugar) for incorporation into bacterial lipopolysaccharide in Gram-negative bacteria. This is 3-deoxy-manno-octulosonate cytidylyltransferase from Delftia acidovorans (strain DSM 14801 / SPH-1).